We begin with the raw amino-acid sequence, 250 residues long: uncharacterized protein (250 aa).

Residues H165–L208 are a coiled coil. Residues T201–M233 are compositionally biased toward basic and acidic residues. Residues T201 to P250 are disordered.

This is an uncharacterized protein from Treponema pallidum (strain Nichols).